A 324-amino-acid chain; its full sequence is Uroporphyrinogen decarboxylase (324 aa).

Substrate contacts are provided by residues 14–18 (RQAGR), phenylalanine 32, aspartate 63, tyrosine 136, serine 191, and histidine 302.

The protein belongs to the uroporphyrinogen decarboxylase family. Homodimer.

Its subcellular location is the cytoplasm. The enzyme catalyses uroporphyrinogen III + 4 H(+) = coproporphyrinogen III + 4 CO2. It participates in porphyrin-containing compound metabolism; protoporphyrin-IX biosynthesis; coproporphyrinogen-III from 5-aminolevulinate: step 4/4. Its function is as follows. Catalyzes the decarboxylation of four acetate groups of uroporphyrinogen-III to yield coproporphyrinogen-III. The protein is Uroporphyrinogen decarboxylase of Neorickettsia sennetsu (strain ATCC VR-367 / Miyayama) (Ehrlichia sennetsu).